Reading from the N-terminus, the 167-residue chain is Menaquinol:cytochrome c reductase iron-sulfur subunit (167 aa).

Residues 59–158 (TKEPQRFDFK…QEVKDGFLYL (100 aa)) enclose the Rieske domain. 4 residues coordinate [2Fe-2S] cluster: C100, H102, C121, and H124. C105 and C123 are disulfide-bonded.

Belongs to the Rieske iron-sulfur protein family. In terms of assembly, the main subunits of the menaquinol:cytochrome c complex are a Rieske-type iron-sulfur protein (QcrA), a cytochrome b (QcrB) and a cytochrome c (QcrC). The cofactor is [2Fe-2S] cluster.

In terms of biological role, component of the menaquinol:cytochrome c reductase complex. The Rieske protein is a high potential 2Fe-2S protein. This is Menaquinol:cytochrome c reductase iron-sulfur subunit (qcrA) from Bacillus subtilis (strain 168).